The following is a 1248-amino-acid chain: ATP-dependent helicase/nuclease subunit A (1248 aa).

The UvrD-like helicase ATP-binding domain maps to 4–480 (TKWTKEQYAA…ILLFKNFRSR (477 aa)). Position 25-32 (25-32 (AAAGAGKT)) interacts with ATP. In terms of domain architecture, UvrD-like helicase C-terminal spans 523-820 (ETVVGGAIEL…RLMSIHKSKG (298 aa)).

The protein belongs to the helicase family. AddA subfamily. Heterodimer of AddA and AddB/RexB. The cofactor is Mg(2+).

The enzyme catalyses Couples ATP hydrolysis with the unwinding of duplex DNA by translocating in the 3'-5' direction.. The catalysed reaction is ATP + H2O = ADP + phosphate + H(+). Functionally, the heterodimer acts as both an ATP-dependent DNA helicase and an ATP-dependent, dual-direction single-stranded exonuclease. Recognizes the chi site generating a DNA molecule suitable for the initiation of homologous recombination. The AddA nuclease domain is required for chi fragment generation; this subunit has the helicase and 3' -&gt; 5' nuclease activities. The chain is ATP-dependent helicase/nuclease subunit A from Ruminiclostridium cellulolyticum (strain ATCC 35319 / DSM 5812 / JCM 6584 / H10) (Clostridium cellulolyticum).